The following is a 590-amino-acid chain: Protein NRT1/ PTR FAMILY 6.3 (590 aa).

Helical transmembrane passes span L46–G66 and F77–G97. T101 is modified (phosphothreonine; by CIPK23). 10 helical membrane-spanning segments follow: residues I102 to I122, G143 to V163, F193 to D213, W219 to T239, M342 to L362, I374 to L394, I423 to K443, L460 to Y480, G501 to V521, and Y542 to F562. Substrate contacts are provided by H356 and T360.

It belongs to the major facilitator superfamily. Proton-dependent oligopeptide transporter (POT/PTR) (TC 2.A.17) family. In terms of assembly, monomer and homodimer. The dimer has the 2 monomers in the same orientation. Interacts with CIPK23. Post-translationally, acts as a high-affinity nitrate transporter when phosphorylated and as a low-affinity transporter when dephosphorylated. Forms homodimer when unphosphorylated and monomer when phosphorylated. Low nitrogen concentration in the medium stimulates phosphorylation. Phosphorylation also regulates the nitrate signaling. Expressed in the stele in lateral root primordia before emergence and in the tip of primary and emerged lateral roots. Detected in emerging and immature leaves, guard cells, flower buds, style, stigma, anthers and pollen grains. Not detected in the shoot apical meristem.

It is found in the membrane. In terms of biological role, dual affinity nitrate transporter. Involved in proton-dependent nitrate uptake and in the regulation of the nitrate transporter NRT2.1. Also acts as a nitrate sensor that trigger a specific signaling pathway stimulating lateral root growth and seed germination. The uptake activity is not required for sensor function. Displays an auxin transport facilitation inhibited by high nitrate concentration. Required to prevent auxin accumulation in preemerged lateral root primordia and young lateral roots when external nitrate concentration is low or null. May be involved in the basipetal transport of auxin out of the lateral root tips. Acts as a bidirectional transporter involved in root-to-shoot nitrate translocation. Recognizes specifically nitrate and chlorate, but not nitrite, alanine, sulfate, phosphate or the di-peptide Ala-Ala. The protein is Protein NRT1/ PTR FAMILY 6.3 (NPF6.3) of Arabidopsis thaliana (Mouse-ear cress).